The chain runs to 165 residues: Peptide methionine sulfoxide reductase MsrA (165 aa).

Cys11 is an active-site residue.

It belongs to the MsrA Met sulfoxide reductase family.

The enzyme catalyses L-methionyl-[protein] + [thioredoxin]-disulfide + H2O = L-methionyl-(S)-S-oxide-[protein] + [thioredoxin]-dithiol. It catalyses the reaction [thioredoxin]-disulfide + L-methionine + H2O = L-methionine (S)-S-oxide + [thioredoxin]-dithiol. Has an important function as a repair enzyme for proteins that have been inactivated by oxidation. Catalyzes the reversible oxidation-reduction of methionine sulfoxide in proteins to methionine. The polypeptide is Peptide methionine sulfoxide reductase MsrA (Ureaplasma urealyticum serovar 10 (strain ATCC 33699 / Western)).